Here is a 315-residue protein sequence, read N- to C-terminus: Methenyltetrahydromethanopterin cyclohydrolase (315 aa).

Belongs to the MCH family.

It is found in the cytoplasm. The catalysed reaction is 5,10-methenyl-5,6,7,8-tetrahydromethanopterin + H2O = N(5)-formyl-5,6,7,8-tetrahydromethanopterin + H(+). It functions in the pathway one-carbon metabolism; methanogenesis from CO(2); 5,10-methenyl-5,6,7,8-tetrahydromethanopterin from CO(2): step 3/3. Functionally, catalyzes the reversible interconversion of 5-formyl-H(4)MPT to methenyl-H(4)MPT(+). The chain is Methenyltetrahydromethanopterin cyclohydrolase from Methanosphaerula palustris (strain ATCC BAA-1556 / DSM 19958 / E1-9c).